A 278-amino-acid polypeptide reads, in one-letter code: Large ribosomal subunit protein uL2 (278 aa).

Disordered stretches follow at residues Thr-28–His-58 and Gly-223–Arg-278. Residues Arg-43–His-53 show a composition bias toward polar residues. A compositionally biased stretch (basic residues) spans Ile-268–Arg-278.

It belongs to the universal ribosomal protein uL2 family. Part of the 50S ribosomal subunit. Forms a bridge to the 30S subunit in the 70S ribosome.

Functionally, one of the primary rRNA binding proteins. Required for association of the 30S and 50S subunits to form the 70S ribosome, for tRNA binding and peptide bond formation. It has been suggested to have peptidyltransferase activity; this is somewhat controversial. Makes several contacts with the 16S rRNA in the 70S ribosome. The chain is Large ribosomal subunit protein uL2 from Nocardioides sp. (strain ATCC BAA-499 / JS614).